We begin with the raw amino-acid sequence, 478 residues long: Dynein regulatory complex subunit 4 (478 aa).

The span at 1–12 (MAPKKKGKKGKA) shows a compositional bias: basic residues. The disordered stretch occupies residues 1-33 (MAPKKKGKKGKAKGTPIVDGLAPEDMSKEQVEE). The tract at residues 1–114 (MAPKKKGKKG…LLYEHQNNLT (114 aa)) is regulates microtubule-binding. A microtubule-binding region spans residues 115-258 (EMKAEGTVVM…NSLKEQMEDM (144 aa)). Positions 242 to 427 (LNNLALINSL…KDLQYELAQV (186 aa)) form a coiled coil. The interval 357 to 478 (QQKTGFKNLV…GPAGLVGTPT (122 aa)) is interaction with SMO.

The protein belongs to the DRC4 family. Component of the nexin-dynein regulatory complex (N-DRC). Interacts with microtubules. Interacts with SMO. Interacts (via coiled-coil domains) with RAB3B (in GTP-bound form). Interacts with DRC1. Interacts with DRC7. As to expression, expressed in respiratory epithelial cells (at protein level). Expressed in the heart, skeletal muscle, pancreas, liver, brain, trachea and lung. Weakly or not expressed in placenta and kidney.

The protein localises to the cytoplasm. It is found in the cytoskeleton. It localises to the cell projection. The protein resides in the cilium. Its subcellular location is the flagellum. The protein localises to the cilium axoneme. It is found in the cilium basal body. It localises to the golgi apparatus. The protein resides in the flagellum axoneme. Functionally, component of the nexin-dynein regulatory complex (N-DRC), a key regulator of ciliary/flagellar motility which maintains the alignment and integrity of the distal axoneme and regulates microtubule sliding in motile axonemes. Plays an important role in the assembly of the N-DRC linker. Plays dual roles at both the primary (or non-motile) cilia to regulate hedgehog signaling and in motile cilia to coordinate cilia movement. Required for proper motile cilia functioning. Positively regulates ciliary smoothened (SMO)-dependent Hedgehog (Hh) signaling pathway by facilitating the trafficking of SMO into the cilium and the stimulation of SMO activity in a GRK2-dependent manner. This chain is Dynein regulatory complex subunit 4 (GAS8), found in Homo sapiens (Human).